Here is a 312-residue protein sequence, read N- to C-terminus: HPr kinase/phosphorylase (312 aa).

Residues H141 and K162 contribute to the active site. 156 to 163 serves as a coordination point for ATP; that stretch reads GDSGIGKS. Position 163 (S163) interacts with Mg(2+). The active-site Proton acceptor; for phosphorylation activity. Proton donor; for dephosphorylation activity is D180. Positions 204 to 213 are important for the catalytic mechanism of both phosphorylation and dephosphorylation; the sequence is LEIRGVGIID. E205 provides a ligand contact to Mg(2+). The active site involves R246. The important for the catalytic mechanism of dephosphorylation stretch occupies residues 267–272; sequence PVRVGR.

Belongs to the HPrK/P family. Homohexamer. Mg(2+) serves as cofactor.

The enzyme catalyses [HPr protein]-L-serine + ATP = [HPr protein]-O-phospho-L-serine + ADP + H(+). It catalyses the reaction [HPr protein]-O-phospho-L-serine + phosphate + H(+) = [HPr protein]-L-serine + diphosphate. In terms of biological role, catalyzes the ATP- as well as the pyrophosphate-dependent phosphorylation of a specific serine residue in HPr, a phosphocarrier protein of the phosphoenolpyruvate-dependent sugar phosphotransferase system (PTS). HprK/P also catalyzes the pyrophosphate-producing, inorganic phosphate-dependent dephosphorylation (phosphorolysis) of seryl-phosphorylated HPr (P-Ser-HPr). The two antagonistic activities of HprK/P are regulated by several intracellular metabolites, which change their concentration in response to the absence or presence of rapidly metabolisable carbon sources (glucose, fructose, etc.) in the growth medium. Therefore, by controlling the phosphorylation state of HPr, HPrK/P is a sensor enzyme that plays a major role in the regulation of carbon metabolism and sugar transport: it mediates carbon catabolite repression (CCR), and regulates PTS-catalyzed carbohydrate uptake and inducer exclusion. The protein is HPr kinase/phosphorylase of Pediococcus pentosaceus (strain ATCC 25745 / CCUG 21536 / LMG 10740 / 183-1w).